A 242-amino-acid chain; its full sequence is DNA repair protein RecO (242 aa).

It belongs to the RecO family. Monomer.

Its function is as follows. Involved in DNA repair and RecF pathway recombination. This is DNA repair protein RecO from Salmonella dublin (strain CT_02021853).